Here is a 383-residue protein sequence, read N- to C-terminus: Geranylgeranyl pyrophosphate synthase esdpD (383 aa).

Lys88, Arg91, and His120 together coordinate isopentenyl diphosphate. Residues Asp150 and Asp154 each coordinate Mg(2+). Arg159 serves as a coordination point for dimethylallyl diphosphate. An isopentenyl diphosphate-binding site is contributed by Arg160. Residues Lys237, Thr238, and Gln271 each coordinate dimethylallyl diphosphate. Asp274 contributes to the Mg(2+) binding site. Dimethylallyl diphosphate-binding residues include Asn278, Lys288, and Lys298.

It belongs to the FPP/GGPP synthase family. It depends on Mg(2+) as a cofactor.

The enzyme catalyses isopentenyl diphosphate + dimethylallyl diphosphate = (2E)-geranyl diphosphate + diphosphate. It carries out the reaction isopentenyl diphosphate + (2E)-geranyl diphosphate = (2E,6E)-farnesyl diphosphate + diphosphate. The catalysed reaction is isopentenyl diphosphate + (2E,6E)-farnesyl diphosphate = (2E,6E,10E)-geranylgeranyl diphosphate + diphosphate. Its pathway is secondary metabolite biosynthesis; terpenoid biosynthesis. Its function is as follows. Geranylgeranyl pyrophosphate synthase; part of the cluster that mediates the biosynthesis of shearones, diterpenoid pyrones (DPs) which are structurally diverse meroterpenoids consisting of a diterpene linked by a pyrone, and which may exhibit a range of bioactivities. Within the pathway, esdpD takes part to the biosynthesis of the molecular scaffold by providing geranylgeranyl pyrophosphate (GGPP) to the prenyltransferase esdpC for C-3 geranylgeranylation of the alpha-pyrone. The molecular scaffold is commonly biosynthesized by a series of enzymes including the non-reducing polyketide synthase (NR-PKS) esdpA that generates an alpha-pyrone; the prenyltransferase esdpC that attaches a geranylgeranyl pyrophosphate (GGPP) produced by the GGPP synthase (GGPPS) esdpD onto the pyrone unit; the FAD-dependent monooxygenase esdpE that converts an olefin on the diterpene unit into an epoxide; and the terpene cyclase esdpB that catalyzes the cyclization reactions to give the molecular backbone shearone A. In the modification steps, esdpF oxidizes the hydroxy group to a ketone at C-3 and esdpG then attaches hydroxy groups at both C-11 and C-12. After that, esdpI hydroxylates at C-20 and esdpH hydroxylates at C-6'. The ether bridge is generated by nucleophilic attack of the hydroxy group at C-20 to the carbonyl carbon at C-3. EsdpH can also functions prior to esdpI. The different combinations of these modification enzymes lead to the production of diverse shearone derivatives, shearone I being the end product of the pathway. The alpha-ketoglutarate-dependent dioxygenase esdpJ seems not to be involved in this pathway. This is Geranylgeranyl pyrophosphate synthase esdpD from Penicillium shearii (Eupenicillium shearii).